The primary structure comprises 159 residues: Aspartate carbamoyltransferase regulatory chain (159 aa).

Residues Cys-108, Cys-113, Cys-138, and Cys-141 each coordinate Zn(2+).

Belongs to the PyrI family. In terms of assembly, contains catalytic and regulatory chains. Zn(2+) is required as a cofactor.

Its function is as follows. Involved in allosteric regulation of aspartate carbamoyltransferase. This Thermofilum pendens (strain DSM 2475 / Hrk 5) protein is Aspartate carbamoyltransferase regulatory chain.